The sequence spans 680 residues: DNA-directed RNA polymerase subunit beta' (680 aa).

4 residues coordinate Zn(2+): C69, C71, C87, and C90. 3 residues coordinate Mg(2+): D489, D491, and D493.

The protein belongs to the RNA polymerase beta' chain family. RpoC1 subfamily. In plastids the minimal PEP RNA polymerase catalytic core is composed of four subunits: alpha, beta, beta', and beta''. When a (nuclear-encoded) sigma factor is associated with the core the holoenzyme is formed, which can initiate transcription. Mg(2+) is required as a cofactor. Zn(2+) serves as cofactor.

It is found in the plastid. It localises to the chloroplast. The enzyme catalyses RNA(n) + a ribonucleoside 5'-triphosphate = RNA(n+1) + diphosphate. DNA-dependent RNA polymerase catalyzes the transcription of DNA into RNA using the four ribonucleoside triphosphates as substrates. The polypeptide is DNA-directed RNA polymerase subunit beta' (Barbarea verna (Land cress)).